The primary structure comprises 353 residues: Uroporphyrinogen decarboxylase (353 aa).

Substrate contacts are provided by residues 35–39 (RQAGR), Phe-54, Asp-84, Tyr-160, Ser-215, and His-329.

This sequence belongs to the uroporphyrinogen decarboxylase family. As to quaternary structure, homodimer.

It is found in the cytoplasm. The catalysed reaction is uroporphyrinogen III + 4 H(+) = coproporphyrinogen III + 4 CO2. The protein operates within porphyrin-containing compound metabolism; protoporphyrin-IX biosynthesis; coproporphyrinogen-III from 5-aminolevulinate: step 4/4. Functionally, catalyzes the decarboxylation of four acetate groups of uroporphyrinogen-III to yield coproporphyrinogen-III. The protein is Uroporphyrinogen decarboxylase of Staphylococcus epidermidis (strain ATCC 12228 / FDA PCI 1200).